The primary structure comprises 199 residues: MAKVLVLYYSAYGHIEAMANAVADGARQAGATVDVKRVPELVPEAVAKAKYFKLDQAAPLAKVDDLADYDAIVVGTGTRFGRMSSQMASFLDQAGGLWARGALHGKVGGAFSSSATQHGGQETTLFSIITNLLHFGMTIVGLNYGFAGQMGVKEVTGGAPYGATTIADGDGSRPPSENELAGARYQGRMIAETAAKLHG.

The Flavodoxin-like domain occupies 4 to 190; it reads VLVLYYSAYG…AGARYQGRMI (187 aa). FMN is bound by residues 10–15 and 78–80; these read SAYGHI and TRF. Residue Y12 coordinates NAD(+). Residue W98 participates in substrate binding. Residues 113-119 and H134 each bind FMN; that span reads SSATQHG.

This sequence belongs to the WrbA family. It depends on FMN as a cofactor.

It carries out the reaction a quinone + NADH + H(+) = a quinol + NAD(+). The enzyme catalyses a quinone + NADPH + H(+) = a quinol + NADP(+). This Nitrobacter winogradskyi (strain ATCC 25391 / DSM 10237 / CIP 104748 / NCIMB 11846 / Nb-255) protein is NAD(P)H dehydrogenase (quinone).